An 893-amino-acid chain; its full sequence is Valine--tRNA ligase (893 aa).

The 'HIGH' region motif lies at 57-67 (PNVTGTLHMGH). The short motif at 545–549 (KMSKS) is the 'KMSKS' region element. Position 548 (Lys548) interacts with ATP. Residues 821 to 855 (TSGSVDLEAERKRLEKDLAAAQKELATTEGKLGNE) are a coiled coil.

It belongs to the class-I aminoacyl-tRNA synthetase family. ValS type 1 subfamily. Monomer.

Its subcellular location is the cytoplasm. The enzyme catalyses tRNA(Val) + L-valine + ATP = L-valyl-tRNA(Val) + AMP + diphosphate. In terms of biological role, catalyzes the attachment of valine to tRNA(Val). As ValRS can inadvertently accommodate and process structurally similar amino acids such as threonine, to avoid such errors, it has a 'posttransfer' editing activity that hydrolyzes mischarged Thr-tRNA(Val) in a tRNA-dependent manner. In Nocardia farcinica (strain IFM 10152), this protein is Valine--tRNA ligase.